The chain runs to 224 residues: Attacin-A (224 aa).

Positions 1 to 20 (MQKTSILIVALVALFAITEA) are cleaved as a signal peptide. Positions 21-34 (LPSLPTTGPIRVRR) are excised as a propeptide.

The protein belongs to the attacin/sarcotoxin-2 family. In terms of tissue distribution, hemolymph (at protein level).

Its subcellular location is the secreted. In terms of biological role, hemolymph antibacterial protein. This is Attacin-A (AttA) from Drosophila melanogaster (Fruit fly).